Here is a 528-residue protein sequence, read N- to C-terminus: Probable serine/threonine-protein kinase 380R (528 aa).

Residues 70–96 are disordered; it reads VKIPKSKSPPKVKSPKRKKSPVRRRVS. Positions 73-95 are enriched in basic residues; it reads PKSKSPPKVKSPKRKKSPVRRRV. One can recognise a Protein kinase domain in the interval 156–507; the sequence is FTNVKAVGKG…LANVLIHKIF (352 aa). Residues 162 to 170 and lysine 187 contribute to the ATP site; that span reads VGKGSFGTV. Aspartate 302 serves as the catalytic Proton acceptor.

It belongs to the protein kinase superfamily. Ser/Thr protein kinase family.

The enzyme catalyses L-seryl-[protein] + ATP = O-phospho-L-seryl-[protein] + ADP + H(+). It catalyses the reaction L-threonyl-[protein] + ATP = O-phospho-L-threonyl-[protein] + ADP + H(+). The chain is Probable serine/threonine-protein kinase 380R from Invertebrate iridescent virus 6 (IIV-6).